The chain runs to 360 residues: MSKQILILPGDGIGPEIMAEAVKVLELANDKYSLGFELSHDVIGGAAIDKHGVPLADETLDRARAADAVLLGAVGGPKWDKIERDIRPERGLLKIRAQLGLFGNLRPAILYPQLADASSLKPEIVSGLDILIVRELTGGIYFGAPRGTRELENGERQSYDTLPYSESEIRRIARVGFDMARVRGKKLCSVDKANVLASSQLWREVVEQVAKDYPDVELSHMYVDNAAMQLVRAPKQFDVIVTDNMFGDILSDEASMLTGSIGMLPSASLDANNKGMYEPCHGSAPDIAGQGIANPLATILSVSMMLRYSFNLTEAADAIEQAVSRVLDQGLRTGDIWSAGCTKVGTQEMGDAVVAALRNL.

Gly-76–Glu-89 lines the NAD(+) pocket. The substrate site is built by Arg-96, Arg-106, Arg-134, and Asp-224. Positions 224, 248, and 252 each coordinate Mg(2+). Gly-282–Asn-294 lines the NAD(+) pocket.

This sequence belongs to the isocitrate and isopropylmalate dehydrogenases family. LeuB type 1 subfamily. Homodimer. Mg(2+) serves as cofactor. Requires Mn(2+) as cofactor.

The protein resides in the cytoplasm. The catalysed reaction is (2R,3S)-3-isopropylmalate + NAD(+) = 4-methyl-2-oxopentanoate + CO2 + NADH. The protein operates within amino-acid biosynthesis; L-leucine biosynthesis; L-leucine from 3-methyl-2-oxobutanoate: step 3/4. Its function is as follows. Catalyzes the oxidation of 3-carboxy-2-hydroxy-4-methylpentanoate (3-isopropylmalate) to 3-carboxy-4-methyl-2-oxopentanoate. The product decarboxylates to 4-methyl-2 oxopentanoate. In Pseudomonas fluorescens (strain ATCC BAA-477 / NRRL B-23932 / Pf-5), this protein is 3-isopropylmalate dehydrogenase.